We begin with the raw amino-acid sequence, 345 residues long: Meiotic recombination protein rec12 (345 aa).

A Topo IIA-type catalytic domain is found at 5-137; it reads DKKKVVRSWI…LNVEASAKGL (133 aa). Catalysis depends on Tyr-98, which acts as the O-(5'-phospho-DNA)-tyrosine intermediate. Positions 179 and 229 each coordinate Mg(2+).

It belongs to the TOP6A family. Component of the DSB catalytic core (DSBC) complex, composed of at least rec12, rec6 and rec14. The complex interacts with mde2. Mg(2+) is required as a cofactor.

Its subcellular location is the cytoplasm. The protein resides in the nucleus. The catalysed reaction is ATP-dependent breakage, passage and rejoining of double-stranded DNA.. Required for formation of the double-strand breaks (DSBs) that initiate meiotic recombination. Required for crossover recombination and chiasmatic segregation of chromosomes during meiosis I. Also involved in the faithful equational segregation of chromosomes during meiosis II. This Schizosaccharomyces pombe (strain 972 / ATCC 24843) (Fission yeast) protein is Meiotic recombination protein rec12.